The chain runs to 321 residues: AA9 family lytic polysaccharide monooxygenase C (321 aa).

Positions 1 to 18 (MKLQLIIPFSFLISYVSA) are cleaved as a signal peptide. A Cu(2+)-binding site is contributed by H19. N33 carries an N-linked (GlcNAc...) asparagine glycan. 2 disulfide bridges follow: C57/C191 and C161/C242. H103 is a binding site for Cu(2+). O2 contacts are provided by H177 and Q186. Residue Y188 coordinates Cu(2+). Residue N195 is glycosylated (N-linked (GlcNAc...) asparagine). The region spanning 283–319 (GTAAIYAQCGGQGWTGATVCASGSKCVVSSAFYSQCL) is the CBM1 domain.

It belongs to the polysaccharide monooxygenase AA9 family. The cofactor is Cu(2+).

The protein localises to the secreted. The enzyme catalyses [(1-&gt;4)-beta-D-glucosyl]n+m + reduced acceptor + O2 = 4-dehydro-beta-D-glucosyl-[(1-&gt;4)-beta-D-glucosyl]n-1 + [(1-&gt;4)-beta-D-glucosyl]m + acceptor + H2O.. Major lytic polysaccharide monooxygenase (LPMO) that depolymerizes crystalline and amorphous polysaccharides via the oxidation of scissile alpha- or beta-(1-4)-glycosidic bonds, yielding C1 and C4 oxidation products. Catalysis by LPMOs requires the reduction of the active-site copper from Cu(II) to Cu(I) by a reducing agent and H(2)O(2) or O(2) as a cosubstrate. This Botryotinia fuckeliana (strain B05.10) (Noble rot fungus) protein is AA9 family lytic polysaccharide monooxygenase C.